A 154-amino-acid polypeptide reads, in one-letter code: Transcriptional repressor NrdR (154 aa).

A zinc finger spans residues 3 to 34 (CPFCGANDTKVIDSRLVAEGEQVRRRRECVAC). An ATP-cone domain is found at 49-139 (PRLIKQDGTR…VYRRFQDLDE (91 aa)).

The protein belongs to the NrdR family. It depends on Zn(2+) as a cofactor.

Functionally, negatively regulates transcription of bacterial ribonucleotide reductase nrd genes and operons by binding to NrdR-boxes. This is Transcriptional repressor NrdR from Pseudomonas putida (strain ATCC 700007 / DSM 6899 / JCM 31910 / BCRC 17059 / LMG 24140 / F1).